A 3948-amino-acid chain; its full sequence is MGPPSQATAANEPIAVIGSGCRFPGSASSPSKLWQLLSQPRDVLSEIPKSRFDPHGFYNKNGETGGHSNVLHSYVLDEDIRAWDADFFKVSASEAAAIDPQQRLLMETVYEALEAGGQQIHALRGSDTAVYVGLMGEEYSDIQGRELDMMPTYHATGTARSIVSNRISYFFDWHGASMTIDTACSSSLVAVHQCVQAIRSGYSRVAVAAGTNLCLGPEPYISESTFHMLSPRGRSHMWDASADGYGRGEGVAAVILKKLSDAIADGDHIECVIRETGVNQDGRTNGITVPSPDAQVALIQDTYRRAGLDLARPEDQPQFFEAHGTGTGAGDPLEAEAIYRAIGTRMAEGKRLYVGSIKTIIGHTEGTAGIAGLMKASLALQNRTIPPNMLFNTLNPKIEPFIKKLQIPQEPRDWPDVPVKRASVNSFGFGGTNAHAILERYEPDAYRQAEGGDAAFAGPYTFSAVSKTSLKQMLVNTLEFLDDNPAVKPRDLAYTLNSRRSTFTFRTSFAGRDVDALRKRITASIESPDWESQAVIRPAKQPLKILGIFTGQGAQWPGMGKQLLDSSPSAQARIQELELALATLQPGDRPCWSLKAELLAEGSKSRLSQAEFAQPLCTALQILLIDLLTAAGVQFSAVVGHSSGEIGAAYAAGVLSARDAIVVAYYRGVHTKLARGDGDQPGAMLAAGTTFEDAQDLVSLPELEGRIAIAACNSPSSVTLSGDADAIEAAVEMLSDEQKFARTLRVDKAYHSHHMRPCSEPYVNSLRRAGVAARDPRPETKWFSSVHAGRVLTSAAAEQLSDTYWALNMAQTVLFSAAVEEAVASEQYTAAIEVGPHGTLKGPAIDTIKAAGRPVPTYLSCLARNMDSLDTFSTAIGQLWATSPEGSLDLERYSITAFGPSQGANSPLKGFPSYPWDNKRRFWSESRRSRAFRLRPEPGHPLLGTLGADSTATDWSWHNVLRLTSLPWVNGHQLQGQTVWPAAGYVALAVEAANQLAKGHGGLSHIIELEDLDIGKAIAFENDKAGVELLFSLHVNNITVVNGQKVLEAGFSSRSSVGEASTEAALNASGHIRLTITDFESPEPSPALPVQDSARIAMTEVDQNLFYNELKVLGYNYTGPFRALHSLSRKLDHGRGRLARVSKSDMHDSERGLLVHPGYLDAAFQAMFLAYAYPGDGQIWSLHVPVSIGRIRIDATQSRANADSYLTFDSATNAVSQNNGQRGLAGDVNIFSADGQTGLVQVENIRLIPFAAASEANDAQVYYHNVWNTATPDGLLASEAFKAGEGVAQEGLGQAAGILAHVVGQITHINPHARLLQIGDESHEVAQRVLGKIGGAFSHYTLTSPSPDAVEEARDALHAKSRHLGFMELRPNEDFVAQGLREQSFEVAISALAAHTVQDAEAYIKKIHQVLRPGGYLLMLEPTLDSLRGSLSGKGKGTRGIPTAEWHSLLLRAGFTGVETSASDSDRSGPPFNVLVSRAANDHVNLLLEPSTIPSPEARAEHTLIVSGRSLASVRLAETMRRLLTPHTDRISVVSTVGDLTSLDLSVRPVVLYLADLDEPVFSHYTAEAHAGLQALWTTAQTVLWTTRGAQKHDPHSLQSIGFGRAMAVEHAHAKLNAQFFDFAPGARVDPHALLDDLLRLQILGKRSSNTQGDFVWTKEPEIQVDELGRRWIPRLVPHSDFNNGYNAARRSIVADADPSRHVVEVVSSRNSDGSLQRSLLRLTVPRTANVDSQEPLTKLRVLYTAETPFHPPSSAQLYASIGLDVTTSKPFVALSSTISSIIEVPTSSLIEYNHRLAEGPAHLHGITTSMLASLIIRTAKQDAATVLLEPSRELVSLLSKDAAAQDLKLAFVTASPATPKSESIHLGAYSTDSAIRRALSFNIASVLDFTNRGSWSERILKQLAPDVIVESADSFRAHGLAPAEIIEAFRSFIDAAPIAVQDHELVSADDFVASQRSSPSILDWAGSSTVSVSVQTPDSQPIFRGDRTYILFGLAGAGGLGLPLAEYMASLGARYIVLTSRNPEVDQDLVAEYASRGVHLRFMANDITNENQVSNLVSEIRASWPPIAGVANGANVLNDMQFKDMTHDDMVKVLRPKVEGSKTLDRLFFDDPLEFFIGFSSISIVFGRSGQSNYDAANIFMLGLASQRRARGLNASVIDIGPISGVGLMARDVSENVMGLLVNHGYRKMSGRDFLQLFLNGITCGRVESGEPEELITGLTVHPKNGDFKPTWTDNARFSHLFLNTDDSSGSSADGTGQMESIQDLLLRSSTKNDVARVLRHAILNKMQNVLSLSDESVLDSESLLQRDTSSLGLDSLLAVELRTWMLGELEVDLPVLKILSDTPIQGLVDFAVDNLPPALAPSVTPEGKDSITEEDLTAPKAKTDAPAAAPTPASATAPGSKSDGNVSSIARSADQSPSHKDTLPQPTAILTNATAGTKPVSPSLSVTGSTSSAAGDDETPTSSQAASLESSQVIDSRPVIDYKPVIEKTLPMSYGQSRFWVMNQIVQDPTAFNITCDIEISSEVDKAVLSRAVDIIGARHEALRTCFLNDENHEPIQAVMNTSTLRLEVVSDDQSQVDSYFEQVKKTVYDLSNGYLMRALLVSTSKTSHHLIVGYHHVNMDSTSFVVFMSDLLKIYAGQTLSPPKVQYPDFAQYQLQRLRNGQWASHINYWTREFAKLPDPLPLLSISPKASRPRPYLTNYQNIDAETRVSATVARQIQSTSRRLKVTPFHVYTTVLQIVLARLSGTDDVCIGMADANRTDIGAIDSIGNFLNLLPLRLTTDAKQSFETLVKVTKNKILHALSHSAVPFDVILEKVGVQRSPTHSPLFQAFIDYRHVTEKLPFGTGFLEGKRYAVSETPYDIMVEMIDTPTGEASLKILVQEALYTSEDAQTIMDCYINLLDAVTKDDRQAVGKPQIFNSSKVQKALELGQGETLNLQHATILPELDDIAAVQPTLTALQDSIGGSLSWSEMKAKSIAIGRNLDQLRLAPQSRVGVFQAPEVDWVCSMLGVWRSGHIYVPLETTQGIKRLSDVAQQARLDAILLHDPTVSLFSQLSLPNPLPTINVSAVPFAHLTDQRHFSTLKPDDQAMIVYTSGSTGVPKGITIAHRVVVNAVRSFLHRWPMTPQTVLQQTALSFDVSWWATVVGLATKGSVVVAGSDSRRDPRALTDLIVSKDITFTFAVPSESVSWLESGNADALRASSWAYHCSGGEPYSLNLIDKLKTLNKPDLTAINIYGPTETMIPNAHVVEYRTLTADDLPVPIGTTMPNYLARVVDLEGHPVPAGVPGELIFVGPGIASGYVDNAALTAERFPKDSLAGPEYVKNGWDVAHNSGDHGYLDGKTGEFVLQARIKGDTQVKLRGLRIDMQDVEANILTASNRQITDAIVHVRKPELNNPSADFLLAHVVLSREARLRYPTPADQSAFFRDIVRDLRVPDYMRPALVVALDSLPLTHHGKADRRAIANLPLDQIASQLQKEPVPLTNKGGLKETPVARPTRYQNDPIPRQVLSSSPFSSLDQVKDLWLDILGTAVNAHTLDPESDFFLVGGNSLLLIRIQGELRKRAGLDVPLTQLFQNSTLGQMASLLDGKDRAKQQGASGIDWVSEIKIQPNLARLRANRAPLPQDGLVMALTGATGFLGLELTRRLIDLPNVRTVHALSVRDSRKLSQLQSPKLVVHSGDLSRPSLGMDSGVLAQIFKTSHVVIHNGADVSFLKSYGSVRATNLESTKEIAKLALQHNNVRALHYVSTAGIATMLSHDLYEESIGSFPPSSSPEGYVLTKWAAELYLERVAAVTNLPVTIHRPTAIVGENAPHLDVMSNILHYSQKLNTVPSMTALEGTFQFVPVEDVANGLVGRVVAGHSSTLSAVEYQNHNGAIEDTVDVHGLAPYLSNKHGRSVTVTPDAEWIALASRAGMADEVVQYMGGVNMSDRKGEKWRFPRALNGSKP.

One can recognise a Ketosynthase family 3 (KS3) domain in the interval 11–440 (NEPIAVIGSG…GTNAHAILER (430 aa)). Residues C184, H323, and H363 each act as for beta-ketoacyl synthase activity in the active site. Positions 548–881 (IFTGQGAQWP…FSTAIGQLWA (334 aa)) are malonyl-CoA:ACP transacylase (MAT) domain. An N-terminal hotdog fold region spans residues 940-1079 (HPLLGTLGAD…GHIRLTITDF (140 aa)). A dehydratase (DH) domain region spans residues 940–1254 (HPLLGTLGAD…IRLIPFAAAS (315 aa)). A PKS/mFAS DH domain is found at 940 to 1256 (HPLLGTLGAD…LIPFAAASEA (317 aa)). Catalysis depends on H972, which acts as the Proton acceptor; for dehydratase activity. Positions 1098-1256 (MTEVDQNLFY…LIPFAAASEA (159 aa)) are C-terminal hotdog fold. D1161 acts as the Proton donor; for dehydratase activity in catalysis. Positions 1299–1460 (LAHVVGQITH…LRAGFTGVET (162 aa)) are methyltransferase (MT) domain. Residues 1989-2165 (TYILFGLAGA…ASVIDIGPIS (177 aa)) are ketoreductase (KR) domain. In terms of domain architecture, Carrier 1 spans 2275-2357 (DVARVLRHAI…GLVDFAVDNL (83 aa)). At S2317 the chain carries O-(pantetheine 4'-phosphoryl)serine. A compositionally biased stretch (low complexity) spans 2381-2404 (PKAKTDAPAAAPTPASATAPGSKS). A disordered region spans residues 2381-2473 (PKAKTDAPAA…SSQAASLESS (93 aa)). Composition is skewed to polar residues over residues 2405–2418 (DGNVSSIARSADQS) and 2426–2437 (PQPTAILTNATA). The span at 2441 to 2456 (PVSPSLSVTGSTSSAA) shows a compositional bias: low complexity. Residues 2462–2473 (PTSSQAASLESS) show a composition bias toward polar residues. The interval 2489 to 2926 (EKTLPMSYGQ…PQIFNSSKVQ (438 aa)) is condensation (C) domain. Positions 2950 to 3355 (DIAAVQPTLT…GEFVLQARIK (406 aa)) are adenylation (A) (KR) domain. A disordered region spans residues 3483 to 3507 (PLTNKGGLKETPVARPTRYQNDPIP). Positions 3513–3592 (SSPFSSLDQV…QMASLLDGKD (80 aa)) constitute a Carrier 2 domain. S3552 carries the post-translational modification O-(pantetheine 4'-phosphoryl)serine. The tract at residues 3633–3852 (LTGATGFLGL…QFVPVEDVAN (220 aa)) is reductase (R) domain.

This sequence in the C-terminal section; belongs to the NRP synthetase family.

The protein operates within mycotoxin biosynthesis. Its function is as follows. Hybrid PKS-NRPS synthetase; part of the gene cluster that mediates the biosynthesis of UCS1025A, a member of the pyrrolizidinone family that acts as a strong telomerase inhibitor and displays potent antibacterial and antitumor properties. These compounds share a hemiaminal-containing pyrrolizidinone core fused with a gamma-lactone, giving a furopyrrolizidine that is connected to a decalin fragment. The polyketide synthase module (PKS) of the PKS-NRPS ucsA is responsible for the synthesis of the polyketide backbone via the condensation of an acetyl-CoA starter unit with 6 malonyl-CoA units. The downstream nonribosomal peptide synthetase (NRPS) module then amidates the carboxyl end of the polyketide with a 2S,3S-methylproline derived from L-isoleucine by the 2-oxoglutarate-dependent dioxygenase ucsF which converts L-isoleucine to (4S,5S)-4-methylpyrroline-5-carboxylate that is further converted to 2S,3S-methylproline by the pyrroline-5-carboxylate reductase ucsG. Reductive release of the completed aminoacyl polyketide from the assembly line can form the 3-pyrrolin-2-one structure via an intramolecular Knoevenagel reaction. Because ucsA lacks a designated enoylreductase (ER) domain, the required activity is provided the enoyl reductase ucsL. This keto acyclic precursor is the substrate of the Diels-Alderase ucsH, that catalyzes the Diels-Alder cycloaddition. Oxidation of the 3S-methyl group to a carboxylate by the cytochrome P450 monooxygenase ucsK allows an oxa-Michael cyclization that might involve the reductase/dehydrogenase ucsI and which furnishes the furopyrrolizidine. The oxidase ucsJ likely plays a critical role in stereoselective reduction of the C5-C6 double bond to afford the required R-configured carboxylate group. Further enolization and oxidation at C5 by an unidentified enzyme affords the last intermediate that can undergo oxa-Michael cyclization to yield UCS1025A. The chain is Hybrid PKS-NRPS synthetase ucsA from Acremonium sp.